The following is a 247-amino-acid chain: Golgi-associated RAB2 interactor protein 5A (247 aa).

Positions 1–16 (MGPPLWPDLQEPPPPG) are enriched in pro residues. Disordered regions lie at residues 1-22 (MGPP…SQIR) and 60-92 (GDIA…PTGR).

The protein belongs to the GARIN family. Interacts (via N-terminus) with RAB2B (in GTP-bound form).

It localises to the golgi apparatus. Its function is as follows. RAB2B effector protein which promotes cytosolic DNA-induced innate immune responses. Regulates IFN responses against DNA viruses by regulating the CGAS-STING signaling axis. The sequence is that of Golgi-associated RAB2 interactor protein 5A from Homo sapiens (Human).